We begin with the raw amino-acid sequence, 188 residues long: Elongation factor P (188 aa).

The protein belongs to the elongation factor P family.

The protein localises to the cytoplasm. Its pathway is protein biosynthesis; polypeptide chain elongation. Its function is as follows. Involved in peptide bond synthesis. Stimulates efficient translation and peptide-bond synthesis on native or reconstituted 70S ribosomes in vitro. Probably functions indirectly by altering the affinity of the ribosome for aminoacyl-tRNA, thus increasing their reactivity as acceptors for peptidyl transferase. The polypeptide is Elongation factor P (Saccharopolyspora erythraea (strain ATCC 11635 / DSM 40517 / JCM 4748 / NBRC 13426 / NCIMB 8594 / NRRL 2338)).